The chain runs to 208 residues: Uridine kinase (208 aa).

ATP is bound at residue 11 to 18 (GGTGSGKS).

This sequence belongs to the uridine kinase family.

It is found in the cytoplasm. It carries out the reaction uridine + ATP = UMP + ADP + H(+). The catalysed reaction is cytidine + ATP = CMP + ADP + H(+). It participates in pyrimidine metabolism; CTP biosynthesis via salvage pathway; CTP from cytidine: step 1/3. The protein operates within pyrimidine metabolism; UMP biosynthesis via salvage pathway; UMP from uridine: step 1/1. The sequence is that of Uridine kinase from Clostridium novyi (strain NT).